Reading from the N-terminus, the 447-residue chain is MARKLFGTDGVRGTANTAPMTAEMALRLGAAAGRYFRRDQSAAHRVVIGKDTRLSGYMFETALTAGFTSTGMNVLLLGPIPTPAVALLTQSMRADVGVMISASHNPADDNGIKFFGPDGYKLSDAAEEEIEEILAGDIRPAQAPNIGRAKRIDDGLGRYIERAKRTFPAHLRLDGLKVVVDCANGAAYKVAPAVLWELGADVIPVGVSPNGRNINRDCGSTAPQTAAEAVVSHGADVGICLDGDADRVMILDENGELADGDQLMALFATRWAAQGLLRDNTLVATVMSNLGLEYYLNDLGLKLVRTAVGDRYVVEAMRKGGWNLGGEQSGHIVMLDHGTTGDGLMAGLQFLAEMVQQGRSASELKHSFTTVPQRLENVRFGAGQDPLAAASVKSAIAAAEAQLSGKGRLLIRKSGTEPLVRVMAECEDEAMLTSVVGEVVAAVEAAC.

Residue Ser103 is the Phosphoserine intermediate of the active site. Residues Ser103, Asp242, Asp244, and Asp246 each coordinate Mg(2+). Ser103 carries the post-translational modification Phosphoserine.

This sequence belongs to the phosphohexose mutase family. Mg(2+) is required as a cofactor. Post-translationally, activated by phosphorylation.

The catalysed reaction is alpha-D-glucosamine 1-phosphate = D-glucosamine 6-phosphate. Catalyzes the conversion of glucosamine-6-phosphate to glucosamine-1-phosphate. The protein is Phosphoglucosamine mutase of Dinoroseobacter shibae (strain DSM 16493 / NCIMB 14021 / DFL 12).